Consider the following 132-residue polypeptide: Amicyanin (132 aa).

The first 26 residues, 1–26, serve as a signal peptide directing secretion; it reads MISAKTLRPAIAAIALFAIGATGAWA. At glutamine 27 the chain carries Pyrrolidone carboxylic acid. Residues 27 to 132 enclose the Plastocyanin-like domain; it reads QDKITVTSEK…PFMRGKVIVE (106 aa). Cu cation is bound by residues histidine 80, cysteine 119, histidine 122, and methionine 125.

It depends on Cu cation as a cofactor.

The protein localises to the periplasm. The protein operates within one-carbon metabolism; methylamine degradation. Functionally, primary acceptor of electrons from methylamine dehydrogenase. Passes those electrons on either a soluble cytochrome c or to pseudoazurin. The sequence is that of Amicyanin (mauC) from Paracoccus versutus (Thiobacillus versutus).